The sequence spans 341 residues: Glycerol-3-phosphate dehydrogenase [NAD(P)+] (341 aa).

NADPH contacts are provided by Ser14, Phe15, Arg35, and Lys108. Residues Lys108 and Gly136 each contribute to the sn-glycerol 3-phosphate site. Ala140 is a binding site for NADPH. Residues Lys191, Asp244, Ser254, Arg255, and Asn256 each contribute to the sn-glycerol 3-phosphate site. Lys191 acts as the Proton acceptor in catalysis. Arg255 contacts NADPH. NADPH-binding residues include Val279 and Glu281.

The protein belongs to the NAD-dependent glycerol-3-phosphate dehydrogenase family.

The protein localises to the cytoplasm. The catalysed reaction is sn-glycerol 3-phosphate + NAD(+) = dihydroxyacetone phosphate + NADH + H(+). It carries out the reaction sn-glycerol 3-phosphate + NADP(+) = dihydroxyacetone phosphate + NADPH + H(+). It participates in membrane lipid metabolism; glycerophospholipid metabolism. Its function is as follows. Catalyzes the reduction of the glycolytic intermediate dihydroxyacetone phosphate (DHAP) to sn-glycerol 3-phosphate (G3P), the key precursor for phospholipid synthesis. This is Glycerol-3-phosphate dehydrogenase [NAD(P)+] from Pseudomonas putida (strain ATCC 47054 / DSM 6125 / CFBP 8728 / NCIMB 11950 / KT2440).